We begin with the raw amino-acid sequence, 234 residues long: Small ribosomal subunit protein uS3 (234 aa).

Residues 39-107 (VRKFLNKELA…PAQINIAEVK (69 aa)) enclose the KH type-2 domain.

Belongs to the universal ribosomal protein uS3 family. Part of the 30S ribosomal subunit. Forms a tight complex with proteins S10 and S14.

Its function is as follows. Binds the lower part of the 30S subunit head. Binds mRNA in the 70S ribosome, positioning it for translation. The sequence is that of Small ribosomal subunit protein uS3 from Haemophilus ducreyi (strain 35000HP / ATCC 700724).